Reading from the N-terminus, the 524-residue chain is RNA-binding protein 39 (524 aa).

The segment at 1-146 (MADDIDIEAM…PVREPIDNLT (146 aa)) is disordered. N-acetylalanine is present on Ala-2. The segment covering 14–32 (PYKKDENKLSSANGHEERS) has biased composition (basic and acidic residues). Composition is skewed to basic residues over residues 33–56 (KKRKKSKSRSRSHERKRSKSKERK) and 64–95 (KKSKSRERKRSRSKERRRSRSRSRDRRFRGRY). Tyr-95 carries the phosphotyrosine modification. Residues Ser-97 and Ser-100 each carry the phosphoserine modification. A Glycyl lysine isopeptide (Lys-Gly) (interchain with G-Cter in SUMO2) cross-link involves residue Lys-111. Ser-117 bears the Phosphoserine mark. Lys-119 participates in a covalent cross-link: Glycyl lysine isopeptide (Lys-Gly) (interchain with G-Cter in SUMO2). Residues 119 to 130 (KLSRRRSRSKSP) show a composition bias toward basic residues. Ser-121 and Ser-136 each carry phosphoserine. Positions 131-146 (FRKDKSPVREPIDNLT) are enriched in basic and acidic residues. Thr-146 carries the post-translational modification Phosphothreonine. The 78-residue stretch at 153-230 (RTVFCMQLAA…VPIIVQASQA (78 aa)) folds into the RRM 1 domain. Lys-244 participates in a covalent cross-link: Glycyl lysine isopeptide (Lys-Gly) (interchain with G-Cter in SUMO2). The region spanning 250 to 328 (MRLYVGSLHF…RPMKVGHVTE (79 aa)) is the RRM 2 domain. Residues 291-355 (KGYGFITFSD…RTGIDLGTTG (65 aa)) are activating domain. Positions 291-400 (KGYGFITFSD…ADLQTRLSQQ (110 aa)) are interaction with JUN. Phosphoserine occurs at positions 334, 337, and 341. The segment at 355–400 (GRLQLMARLAEGTGLQIPPAAQQALQMSGSLAFGAVADLQTRLSQQ) is interaction with ESR1 and ESR2. An interaction with NCOA6 region spans residues 400–524 (QTEASALAAA…ATQLLVPSRR (125 aa)). Residues 439-502 (EIKDDVIEEC…KMITAAYVPL (64 aa)) enclose the RRM 3 domain.

Belongs to the splicing factor SR family. Interacts with NCOA6 and JUN. Interacts with ESR1 and ESR2, in the presence of estradiol (E2). Interacts with RSRC1 (via Arg/Ser-rich domain). Interacts with SF3B1. Interacts with ZNF106 (via N-terminus).

Its subcellular location is the nucleus speckle. In terms of biological role, RNA-binding protein that acts as a pre-mRNA splicing factor. Acts by promoting exon inclusion via regulation of exon cassette splicing. Also acts as a transcriptional coactivator for steroid nuclear receptors ESR1/ER-alpha and ESR2/ER-beta, and JUN/AP-1, independently of the pre-mRNA splicing factor activity. The polypeptide is RNA-binding protein 39 (RBM39) (Pongo abelii (Sumatran orangutan)).